A 113-amino-acid chain; its full sequence is Large ribosomal subunit protein uL22 (113 aa).

This sequence belongs to the universal ribosomal protein uL22 family. Part of the 50S ribosomal subunit.

This protein binds specifically to 23S rRNA; its binding is stimulated by other ribosomal proteins, e.g. L4, L17, and L20. It is important during the early stages of 50S assembly. It makes multiple contacts with different domains of the 23S rRNA in the assembled 50S subunit and ribosome. Its function is as follows. The globular domain of the protein is located near the polypeptide exit tunnel on the outside of the subunit, while an extended beta-hairpin is found that lines the wall of the exit tunnel in the center of the 70S ribosome. This Neorickettsia sennetsu (strain ATCC VR-367 / Miyayama) (Ehrlichia sennetsu) protein is Large ribosomal subunit protein uL22.